Here is a 134-residue protein sequence, read N- to C-terminus: Retinol-binding protein 2 (134 aa).

2 residues coordinate all-trans-retinol: Lys41 and Gln109.

This sequence belongs to the calycin superfamily. Fatty-acid binding protein (FABP) family.

It localises to the cytoplasm. Intracellular transport of retinol. This Rattus norvegicus (Rat) protein is Retinol-binding protein 2 (Rbp2).